A 259-amino-acid polypeptide reads, in one-letter code: Protein GrpE (259 aa).

Disordered regions lie at residues 1-74 (MNSD…IKGS) and 228-259 (PGPKVINEEIPDQSASNQELSESVDGSTKDEN). Over residues 17 to 40 (SSQNNPSENSVSSPNSNESVNQVE) the composition is skewed to low complexity. Polar residues-rich tracts occupy residues 56-73 (VDTANEQSSTSCESNIKG) and 240-253 (QSASNQELSESVDG).

The protein belongs to the GrpE family. As to quaternary structure, homodimer.

The protein localises to the cytoplasm. Participates actively in the response to hyperosmotic and heat shock by preventing the aggregation of stress-denatured proteins, in association with DnaK and GrpE. It is the nucleotide exchange factor for DnaK and may function as a thermosensor. Unfolded proteins bind initially to DnaJ; upon interaction with the DnaJ-bound protein, DnaK hydrolyzes its bound ATP, resulting in the formation of a stable complex. GrpE releases ADP from DnaK; ATP binding to DnaK triggers the release of the substrate protein, thus completing the reaction cycle. Several rounds of ATP-dependent interactions between DnaJ, DnaK and GrpE are required for fully efficient folding. This chain is Protein GrpE, found in Prochlorococcus marinus (strain NATL2A).